The following is a 307-amino-acid chain: Haloalkane dehalogenase (307 aa).

The region spanning 34–158 (PVLFLHGNPT…FQAFRTADVG (125 aa)) is the AB hydrolase-1 domain. D106 serves as the catalytic Nucleophile. Residue E130 is the Proton donor of the active site. H272 serves as the catalytic Proton acceptor.

It belongs to the haloalkane dehalogenase family. Type 2 subfamily. In terms of assembly, monomer.

It catalyses the reaction 1-haloalkane + H2O = a halide anion + a primary alcohol + H(+). It functions in the pathway xenobiotic degradation; 1,2-dibromoethane degradation. Catalyzes hydrolytic cleavage of carbon-halogen bonds in halogenated aliphatic compounds, leading to the formation of the corresponding primary alcohols, halide ions and protons. Has a broad substrate specificity, which includes mono- and di-chlorinated and brominated alkanes. The highest activity was found with 1,2-dibromoethane, whereas low activity was measured with the analog 1,2-dichloroethane. This is Haloalkane dehalogenase (dhaAF) from Mycobacterium sp. (strain GP1).